Here is a 76-residue protein sequence, read N- to C-terminus: UPF0346 protein LBUL_1194 (76 aa).

It belongs to the UPF0346 family.

This chain is UPF0346 protein LBUL_1194, found in Lactobacillus delbrueckii subsp. bulgaricus (strain ATCC BAA-365 / Lb-18).